We begin with the raw amino-acid sequence, 100 residues long: Urease subunit gamma (100 aa).

This sequence belongs to the urease gamma subunit family. As to quaternary structure, heterotrimer of UreA (gamma), UreB (beta) and UreC (alpha) subunits. Three heterotrimers associate to form the active enzyme.

The protein resides in the cytoplasm. It catalyses the reaction urea + 2 H2O + H(+) = hydrogencarbonate + 2 NH4(+). The protein operates within nitrogen metabolism; urea degradation; CO(2) and NH(3) from urea (urease route): step 1/1. The chain is Urease subunit gamma from Bordetella bronchiseptica (strain ATCC BAA-588 / NCTC 13252 / RB50) (Alcaligenes bronchisepticus).